Here is a 319-residue protein sequence, read N- to C-terminus: Ribonuclease Z (319 aa).

His-62, His-64, Asp-66, His-67, His-145, Asp-215, and His-273 together coordinate Zn(2+). Asp-66 serves as the catalytic Proton acceptor.

The protein belongs to the RNase Z family. Homodimer. Requires Zn(2+) as cofactor.

The enzyme catalyses Endonucleolytic cleavage of RNA, removing extra 3' nucleotides from tRNA precursor, generating 3' termini of tRNAs. A 3'-hydroxy group is left at the tRNA terminus and a 5'-phosphoryl group is left at the trailer molecule.. Zinc phosphodiesterase, which displays some tRNA 3'-processing endonuclease activity. Probably involved in tRNA maturation, by removing a 3'-trailer from precursor tRNA. This is Ribonuclease Z from Borreliella afzelii (strain PKo) (Borrelia afzelii).